The primary structure comprises 739 residues: Gamma-tubulin complex component 4 homolog (739 aa).

It belongs to the TUBGCP family.

Its subcellular location is the cytoplasm. It localises to the cytoskeleton. It is found in the microtubule organizing center. Its function is as follows. Gamma-tubulin complex is necessary for microtubule nucleation at the microtubule organizing centers (MTOCs). This chain is Gamma-tubulin complex component 4 homolog (85P), found in Medicago truncatula (Barrel medic).